A 734-amino-acid polypeptide reads, in one-letter code: Monosaccharide-sensing protein 1 (734 aa).

The next 6 membrane-spanning stretches (helical) occupy residues 6–26, 44–64, 79–99, 102–122, 133–153, and 163–183; these read LVALAATIGNFLQGWDNATIA, GLVVAMSLIGATVITTCSGPI, VMYFVCGLIMLWSPNVYVLCF, LLNGFGAGLAVTLVPVYISET, TLPQFLGSGGMFLSYCMVFTM, and AMLGVLSIPSLLYLFLTVFYL. The segment at 351–403 is disordered; sequence YNKDNDDYATDDGAGDDDDSDNDLRSPLMSRQTTSMDKDMIPHPTSGSTLSMR. Residues 357–371 are compositionally biased toward acidic residues; that stretch reads DYATDDGAGDDDDSD. Phosphoserine occurs at positions 446 and 480. 6 helical membrane passes run 510-530, 556-576, 588-608, 621-641, 653-673, and 680-700; these read ALVVGVGIQILQQFSGINGVL, ASFLISGLTTLLMLPAIVVAM, LLWTIPVLIVSLVVLVISELI, GCVVLYFCFFVMGYGPIPNIL, LCIAICAMVFWIGDIIVTYSL, and IGLVGVFSIYAAVCVISWIFV.

This sequence belongs to the major facilitator superfamily. Sugar transporter (TC 2.A.1.1) family. In terms of assembly, binds to VIK at the tonoplast. Phosphorylated by VIK; this activation promotes carrier activity. Mostly expressed in juvenile and adult leaves, to a lower extent, in flower tissues, and, at low levels, in roots and stems.

The protein localises to the vacuole membrane. It catalyses the reaction D-glucose(out) + H(+)(in) = D-glucose(in) + H(+)(out). It carries out the reaction sucrose(out) + H(+)(in) = sucrose(in) + H(+)(out). Its activity is regulated as follows. Enhanced activation by VIK-mediated phosphorylation promoting carrier activity and consequently vacuolar sugar accumulation. In terms of biological role, sugar proton-coupled antiporter which contributes to vacuolar sugar import (e.g. monosaccharides including glucose, sucrose and fructose), particularly during stress responses (e.g. in response to cold). Required for cytosolic glucose homeostasis. The polypeptide is Monosaccharide-sensing protein 1 (Arabidopsis thaliana (Mouse-ear cress)).